A 1323-amino-acid polypeptide reads, in one-letter code: Traf2 and NCK-interacting protein kinase (1323 aa).

The Protein kinase domain maps to 25–289 (FELVELVGNG…TEQLMKHPFI (265 aa)). Residues 31–39 (VGNGTYGQV) and lysine 54 each bind ATP. The active-site Proton acceptor is the aspartate 153. Residue threonine 187 is modified to Phosphothreonine. Disordered regions lie at residues 284–347 (MKHP…LPGE), 397–559 (EQKE…LRPV), and 571–838 (SQGP…NEQY). Over residues 288–307 (FIRDQPNERQVRIQLKDHID) the composition is skewed to basic and acidic residues. Residues 290–1010 (RDQPNERQVR…EIRKYKKRFN (721 aa)) are mediates interaction with NEDD4. Residues 317–335 (DETEYEYSGSEEEEEENDS) show a composition bias toward acidic residues. A phosphoserine mark is found at serine 324 and serine 326. 3 stretches are compositionally biased toward basic and acidic residues: residues 397–470 (EQKE…ERDY), 477–494 (QRQE…HYKE), and 503–513 (AWAKEVEERSR). Residues serine 531 and serine 541 each carry the phosphoserine modification. Threonine 552 carries the phosphothreonine modification. Phosphoserine occurs at positions 571, 579, 581, and 611. The span at 623–640 (RIEKFDRSSWLRQEEDIP) shows a compositional bias: basic and acidic residues. Phosphoserine occurs at positions 649, 651, 659, 672, 678, 691, 735, 737, and 740. Over residues 691–726 (SSLQRTSSGSSSSSSTPSSQPSSQGGSQPGSQAGSS) the composition is skewed to low complexity. Composition is skewed to basic and acidic residues over residues 746-760 (EPSK…DITR) and 772-790 (KELR…KKVT). The span at 797–810 (EESESSEEEEEDGE) shows a compositional bias: acidic residues. Serine 922 is subject to Phosphoserine. The interval 939–960 (FVDPRVYQTSPTDEDEEDDESS) is disordered. Positions 950 to 959 (TDEDEEDDES) are enriched in acidic residues. A CNH domain is found at 1010-1297 (NSEILCAALW…KFLCERNDKV (288 aa)).

Belongs to the protein kinase superfamily. STE Ser/Thr protein kinase family. STE20 subfamily. Interacts (via the CNH domain) with RAP2A (GTP-bound form preferentially); the interaction is direct and required for the activation of TNIK by RAP2A. Interacts with NEDD4; recruits RAP2A to NEDD4. Interacts with TRAF2 and NCK. Interacts with TCF7L2/TCF4 and CTNNB1; the interaction is direct. Interacts with TANC1. In terms of processing, autophosphorylated. Autophosphorylation is activated by RAP2A and induces association to the cytoskeletal fraction.

It is found in the nucleus. It localises to the cytoplasm. The protein localises to the recycling endosome. The protein resides in the cytoskeleton. It carries out the reaction L-seryl-[protein] + ATP = O-phospho-L-seryl-[protein] + ADP + H(+). The catalysed reaction is L-threonyl-[protein] + ATP = O-phospho-L-threonyl-[protein] + ADP + H(+). In terms of biological role, serine/threonine kinase that acts as an essential activator of the Wnt signaling pathway. Recruited to promoters of Wnt target genes and required to activate their expression. May act by phosphorylating TCF4/TCF7L2. Appears to act upstream of the JUN N-terminal pathway. May play a role in the response to environmental stress. Part of a signaling complex composed of NEDD4, RAP2A and TNIK which regulates neuronal dendrite extension and arborization during development. More generally, it may play a role in cytoskeletal rearrangements and regulate cell spreading. Phosphorylates SMAD1 on Thr-322. Activator of the Hippo signaling pathway which plays a pivotal role in organ size control and tumor suppression by restricting proliferation and promoting apoptosis. MAP4Ks act in parallel to and are partially redundant with STK3/MST2 and STK4/MST2 in the phosphorylation and activation of LATS1/2, and establish MAP4Ks as components of the expanded Hippo pathway. The sequence is that of Traf2 and NCK-interacting protein kinase (Tnik) from Mus musculus (Mouse).